A 245-amino-acid polypeptide reads, in one-letter code: Fumarate reductase iron-sulfur subunit (245 aa).

The region spanning 17 to 98 (PQSAVNKPHF…NGVITLMPMP (82 aa)) is the 2Fe-2S ferredoxin-type domain. [2Fe-2S] cluster is bound by residues Cys-60, Cys-65, Cys-68, and Cys-80. Residues 145-174 (AQEVFELDRCIECGCCIASCGTKLMRPNFI) form the 4Fe-4S ferredoxin-type domain. The [4Fe-4S] cluster site is built by Cys-154, Cys-157, and Cys-160. Residues Cys-164, Cys-211, and Cys-217 each coordinate [3Fe-4S] cluster. Residue Cys-221 participates in [4Fe-4S] cluster binding.

It belongs to the succinate dehydrogenase/fumarate reductase iron-sulfur protein family. Part of an enzyme complex containing three subunits: a flavoprotein (frdA), an iron-sulfur protein (frdB), and diheme cytochrome b (frdC). [2Fe-2S] cluster is required as a cofactor. Requires [3Fe-4S] cluster as cofactor. [4Fe-4S] cluster serves as cofactor.

It carries out the reaction a menaquinone + succinate = a menaquinol + fumarate. The chain is Fumarate reductase iron-sulfur subunit (frdB) from Helicobacter pylori (strain J99 / ATCC 700824) (Campylobacter pylori J99).